The primary structure comprises 466 residues: 3-isopropylmalate dehydratase large subunit (466 aa).

[4Fe-4S] cluster contacts are provided by Cys-347, Cys-407, and Cys-410.

The protein belongs to the aconitase/IPM isomerase family. LeuC type 1 subfamily. As to quaternary structure, heterodimer of LeuC and LeuD. The cofactor is [4Fe-4S] cluster.

It carries out the reaction (2R,3S)-3-isopropylmalate = (2S)-2-isopropylmalate. It functions in the pathway amino-acid biosynthesis; L-leucine biosynthesis; L-leucine from 3-methyl-2-oxobutanoate: step 2/4. In terms of biological role, catalyzes the isomerization between 2-isopropylmalate and 3-isopropylmalate, via the formation of 2-isopropylmaleate. The protein is 3-isopropylmalate dehydratase large subunit of Escherichia coli O9:H4 (strain HS).